A 257-amino-acid chain; its full sequence is 3-deoxy-manno-octulosonate cytidylyltransferase (257 aa).

It belongs to the KdsB family.

It is found in the cytoplasm. The enzyme catalyses 3-deoxy-alpha-D-manno-oct-2-ulosonate + CTP = CMP-3-deoxy-beta-D-manno-octulosonate + diphosphate. It functions in the pathway nucleotide-sugar biosynthesis; CMP-3-deoxy-D-manno-octulosonate biosynthesis; CMP-3-deoxy-D-manno-octulosonate from 3-deoxy-D-manno-octulosonate and CTP: step 1/1. Its pathway is bacterial outer membrane biogenesis; lipopolysaccharide biosynthesis. Functionally, activates KDO (a required 8-carbon sugar) for incorporation into bacterial lipopolysaccharide in Gram-negative bacteria. The protein is 3-deoxy-manno-octulosonate cytidylyltransferase of Stenotrophomonas maltophilia (strain K279a).